A 294-amino-acid polypeptide reads, in one-letter code: uncharacterized protein (294 aa).

The next 3 helical transmembrane spans lie at 21–41, 51–71, and 77–97; these read AIVA…TFTF, PIIW…LWAA, and ILFS…VFLF. Residues 156-176 form a disordered region; sequence HPVPFPAEPGSPDPVSPPPPI. The stretch at 184–215 forms a coiled coil; sequence ERAESLHAGNIELAEDLQRIQEMERNLENERS. A compositionally biased stretch (basic and acidic residues) spans 265 to 277; the sequence is QQENESRLEERRF. Positions 265 to 294 are disordered; that stretch reads QQENESRLEERRFQSHSTNSLFEADSSRDN.

The protein resides in the mitochondrion membrane. This is an uncharacterized protein from Arabidopsis thaliana (Mouse-ear cress).